The chain runs to 243 residues: Orotidine 5'-phosphate decarboxylase (243 aa).

Residues aspartate 19, lysine 41, 69–78 (DLKFFDIPAT), threonine 124, arginine 185, glutamine 194, glycine 214, and arginine 215 contribute to the substrate site. Lysine 71 serves as the catalytic Proton donor.

It belongs to the OMP decarboxylase family. Type 1 subfamily. Homodimer.

It catalyses the reaction orotidine 5'-phosphate + H(+) = UMP + CO2. Its pathway is pyrimidine metabolism; UMP biosynthesis via de novo pathway; UMP from orotate: step 2/2. In terms of biological role, catalyzes the decarboxylation of orotidine 5'-monophosphate (OMP) to uridine 5'-monophosphate (UMP). In Xanthomonas axonopodis pv. citri (strain 306), this protein is Orotidine 5'-phosphate decarboxylase.